The following is a 427-amino-acid chain: Nucleolar and spindle-associated protein 1 (427 aa).

The interval 41 to 190 is disordered; that stretch reads AHLNPETRKE…LGNNKRTSAT (150 aa). A compositionally biased stretch (basic and acidic residues) spans 43-55; the sequence is LNPETRKENKNQD. Basic residues predominate over residues 83 to 96; it reads TKTRRRRRKKHKTI. Residues 119 to 128 show a composition bias toward low complexity; the sequence is NFQNQENQEN. Serine 139 bears the Phosphoserine mark. The segment covering 159 to 179 has biased composition (basic and acidic residues); sequence NDIKDSKKPLEKRSLCTDEFS. Residues 181 to 190 are compositionally biased toward polar residues; the sequence is LGNNKRTSAT. A Phosphothreonine modification is found at threonine 191. Residues 235–312 form a disordered region; the sequence is IVTPVPPRGR…QAVFRTPKSK (78 aa). Residues 243 to 367 are interaction with microtubules; it reads GRLSVPCTPA…HKGKLKPWGQ (125 aa). Serine 246 carries the post-translational modification Phosphoserine. At threonine 250 the chain carries Phosphothreonine. Over residues 252 to 264 the composition is skewed to polar residues; the sequence is ARQQCPQGHSATK. Serine 261 carries the post-translational modification Phosphoserine. A phosphothreonine mark is found at threonine 323 and threonine 334. Serine 337 and serine 348 each carry phosphoserine. Residues 354–427 are disordered; the sequence is NYKPHKGKLK…RRNLGVTKAQ (74 aa). Positions 369–375 match the KEN box motif; it reads KENNSLN. Residues 393–425 adopt a coiled-coil conformation; it reads LQTREERWKRQEQERKEKKEKLLEARRNLGVTK. Positions 394-419 are enriched in basic and acidic residues; it reads QTREERWKRQEQERKEKKEKLLEARR.

Belongs to the NUSAP family. In terms of assembly, interacts with DNA and microtubules. Microtubule bundling is inhibited by IPO7, KPNA2 and KPNB1 while association with DNA is also inhibited by IPO7 and KPNA2. Ubiquitinated. Ubiquitination by FZR1 may lead to proteasome-dependent degradation of this protein.

It localises to the cytoplasm. The protein localises to the nucleus. The protein resides in the nucleolus. It is found in the cytoskeleton. Its subcellular location is the spindle. It localises to the chromosome. Functionally, microtubule-associated protein with the capacity to bundle and stabilize microtubules. May associate with chromosomes and promote the organization of mitotic spindle microtubules around them. The sequence is that of Nucleolar and spindle-associated protein 1 (Nusap1) from Mus musculus (Mouse).